The primary structure comprises 358 residues: Heme A synthase (358 aa).

Helical transmembrane passes span 25–45 (LVRY…MVGG), 111–131 (LLAR…WLTG), 141–161 (MLGL…MVAS), 176–196 (IHLT…RGLV), 210–230 (FAGW…LVAG), 269–289 (VQFV…LHAV), 304–324 (TIVL…TLLM), and 326–346 (APLH…AFAV). Histidine 273 contributes to the heme binding site. Residue histidine 334 participates in heme binding.

This sequence belongs to the COX15/CtaA family. Type 2 subfamily. As to quaternary structure, interacts with CtaB. Heme b serves as cofactor.

It localises to the cell membrane. The enzyme catalyses Fe(II)-heme o + 2 A + H2O = Fe(II)-heme a + 2 AH2. The protein operates within porphyrin-containing compound metabolism; heme A biosynthesis; heme A from heme O: step 1/1. Its function is as follows. Catalyzes the conversion of heme O to heme A by two successive hydroxylations of the methyl group at C8. The first hydroxylation forms heme I, the second hydroxylation results in an unstable dihydroxymethyl group, which spontaneously dehydrates, resulting in the formyl group of heme A. The chain is Heme A synthase from Brucella suis (strain ATCC 23445 / NCTC 10510).